Here is a 267-residue protein sequence, read N- to C-terminus: Thiazole synthase (267 aa).

Lys-101 serves as the catalytic Schiff-base intermediate with DXP. 1-deoxy-D-xylulose 5-phosphate is bound by residues Gly-162, 188–189 (AG), and 210–211 (NT). Residues 247 to 267 (HASPSSPAAGVPCLPDPEVPV) are disordered.

The protein belongs to the ThiG family. In terms of assembly, homotetramer. Forms heterodimers with either ThiH or ThiS.

Its subcellular location is the cytoplasm. The enzyme catalyses [ThiS sulfur-carrier protein]-C-terminal-Gly-aminoethanethioate + 2-iminoacetate + 1-deoxy-D-xylulose 5-phosphate = [ThiS sulfur-carrier protein]-C-terminal Gly-Gly + 2-[(2R,5Z)-2-carboxy-4-methylthiazol-5(2H)-ylidene]ethyl phosphate + 2 H2O + H(+). It functions in the pathway cofactor biosynthesis; thiamine diphosphate biosynthesis. Its function is as follows. Catalyzes the rearrangement of 1-deoxy-D-xylulose 5-phosphate (DXP) to produce the thiazole phosphate moiety of thiamine. Sulfur is provided by the thiocarboxylate moiety of the carrier protein ThiS. In vitro, sulfur can be provided by H(2)S. This chain is Thiazole synthase, found in Deinococcus geothermalis (strain DSM 11300 / CIP 105573 / AG-3a).